The sequence spans 265 residues: Aquaporin-5 (265 aa).

Residues 1–12 (MKKEVCSLAFFK) lie on the Cytoplasmic side of the membrane. The helical transmembrane segment at 13-33 (AVFAEFLATLIFVFFGLGSAL) threads the bilayer. Residues 34–39 (KWPSAL) lie on the Extracellular side of the membrane. Residues 40–60 (PTILQISIAFGLAIGTLAQAL) form a helical membrane-spanning segment. Topologically, residues 61–65 (GPVSG) are cytoplasmic. Positions 66–74 (GHINPAITL) form an intramembrane region, discontinuously helical. The short motif at 69-71 (NPA) is the NPA 1 element. Residues 75 to 87 (ALLIGNQISLLRA) are Cytoplasmic-facing. Residues 88 to 108 (VFYVAAQLVGAIAGAGILYWL) form a helical membrane-spanning segment. The Extracellular segment spans residues 109–126 (APLNARGNLAVNALNNNT). A glycan (N-linked (GlcNAc...) asparagine) is linked at Asn124. The chain crosses the membrane as a helical span at residues 127–147 (TPGKAMVVELILTFQLALCIF). The Cytoplasmic segment spans residues 148–158 (SSTDSRRTSPV). The chain crosses the membrane as a helical span at residues 159–179 (GSPALSIGLSVTLGHLVGIYF). Position 180 (Thr180) is a topological domain, extracellular. Residues 181 to 191 (GCSMNPARSFG) constitute an intramembrane region (discontinuously helical). An NPA 2 motif is present at residues 185 to 187 (NPA). At 192–203 (PAVVMNRFSPSH) the chain is on the extracellular side. A helical membrane pass occupies residues 204–224 (WVFWVGPIVGAMLAAILYFYL). At 225-265 (LFPSSLSLHDRVAVVKGTYEPEEDWEDHREERKKTIELTAH) the chain is on the cytoplasmic side.

Belongs to the MIP/aquaporin (TC 1.A.8) family. In terms of assembly, homotetramer; each monomer provides an independent water pore. Interacts with TRPV4; the interaction is probably indirect and regulates TRPV4 activation by hypotonicity. Salivary glands, lacrimal glands, corneal epithelium in eye, trachea and lung.

It localises to the apical cell membrane. Its subcellular location is the cell membrane. It is found in the cytoplasmic vesicle membrane. The catalysed reaction is H2O(in) = H2O(out). Functionally, aquaporins form homotetrameric transmembrane channels, with each monomer independently mediating water transport across the plasma membrane along its osmotic gradient. Plays an important role in fluid secretion in salivary glands. Required for TRPV4 activation by hypotonicity. Together with TRPV4, controls regulatory volume decrease in salivary epithelial cells. Seems to play a redundant role in water transport in the eye, lung and in sweat glands. This is Aquaporin-5 from Rattus norvegicus (Rat).